The following is a 206-amino-acid chain: 3-isopropylmalate dehydratase small subunit (206 aa).

This sequence belongs to the LeuD family. LeuD type 1 subfamily. Heterodimer of LeuC and LeuD.

It carries out the reaction (2R,3S)-3-isopropylmalate = (2S)-2-isopropylmalate. Its pathway is amino-acid biosynthesis; L-leucine biosynthesis; L-leucine from 3-methyl-2-oxobutanoate: step 2/4. Catalyzes the isomerization between 2-isopropylmalate and 3-isopropylmalate, via the formation of 2-isopropylmaleate. This Leptospira borgpetersenii serovar Hardjo-bovis (strain JB197) protein is 3-isopropylmalate dehydratase small subunit.